The primary structure comprises 439 residues: Agmatine coumaroyltransferase-1 (439 aa).

Catalysis depends on proton acceptor residues His152 and Asp385.

This sequence belongs to the plant acyltransferase family. In terms of assembly, monomer.

It carries out the reaction 4-coumaroyl-CoA + agmatine = N-(4-guanidinobutyl)-4-hydroxycinnamamide + CoA + H(+). With respect to regulation, inhibited by DEPC. Completely inhibited by ZnSO(4), strongly inhibited by CuSO(4), partially inhibited by MnCl(2). Unaffected by MgCl(2) or CaCl(2). In terms of biological role, involved in the synthesis of hordatines (antifungal hydroxycinnamoylagmatine derivatives). Specific for agmatine as the acyl acceptor, inactive towards tyramine and putrescine. Has activity with the acyl donors 4-coumaroyl-CoA, cinnamoyl-CoA, caffeoyl-CoA, feruloyl-CoA, and to a lesser extent sinapoyl-CoA. The sequence is that of Agmatine coumaroyltransferase-1 (ACT-1) from Hordeum vulgare (Barley).